The sequence spans 204 residues: MSSESPLLEKRLSEDSSRYLRLQKWANMSSADALGLEKERPEEKAAAAENPLVFLCARCRRPLGDSLTWVASQEDTNCILLRSVSCNVSVDKEPKLSKCRDEDGCILEALYCTGCSLSLGYVYRCTPKNLDYKRDLFCLSVEAVESYTLGSSEKQIVSEDKELFNLESRVEIEKSIKQMEEVLTALQKKLREVESKLSLASRGS.

Residues Ser13, Ser16, and Ser17 each carry the phosphoserine modification. A Mis18 domain is found at 51–149; sequence PLVFLCARCR…SVEAVESYTL (99 aa). 4 residues coordinate Zn(2+): Cys56, Cys59, Cys112, and Cys115. Residue Lys133 forms a Glycyl lysine isopeptide (Lys-Gly) (interchain with G-Cter in SUMO2) linkage. Phosphoserine is present on Ser204.

Belongs to the mis18 family. In terms of assembly, homodimer, and heterodimer with OIP5/MIS18B. Identified in a complex containing MIS18A, OIP5/MIS18B, MIS18BP1, RBBP7 and RBBP4.

It localises to the nucleus. Its subcellular location is the chromosome. It is found in the centromere. Functionally, required for recruitment of CENPA to centromeres and normal chromosome segregation during mitosis. This chain is Protein Mis18-alpha (Mis18a), found in Mus musculus (Mouse).